The chain runs to 359 residues: Membrane-bound lytic murein transglycosylase C (359 aa).

The first 16 residues, 1-16 (MKKYLALALIAPLLIS), serve as a signal peptide directing secretion. Cys17 carries N-palmitoyl cysteine lipidation. A lipid anchor (S-diacylglycerol cysteine) is attached at Cys17.

It belongs to the transglycosylase Slt family.

It localises to the cell outer membrane. The enzyme catalyses Exolytic cleavage of the (1-&gt;4)-beta-glycosidic linkage between N-acetylmuramic acid (MurNAc) and N-acetylglucosamine (GlcNAc) residues in peptidoglycan, from either the reducing or the non-reducing ends of the peptidoglycan chains, with concomitant formation of a 1,6-anhydrobond in the MurNAc residue.. Functionally, murein-degrading enzyme. May play a role in recycling of muropeptides during cell elongation and/or cell division. The chain is Membrane-bound lytic murein transglycosylase C from Escherichia coli O139:H28 (strain E24377A / ETEC).